The chain runs to 392 residues: ATP phosphoribosyltransferase regulatory subunit (392 aa).

This sequence belongs to the class-II aminoacyl-tRNA synthetase family. HisZ subfamily. As to quaternary structure, heteromultimer composed of HisG and HisZ subunits.

It is found in the cytoplasm. It functions in the pathway amino-acid biosynthesis; L-histidine biosynthesis; L-histidine from 5-phospho-alpha-D-ribose 1-diphosphate: step 1/9. Its function is as follows. Required for the first step of histidine biosynthesis. May allow the feedback regulation of ATP phosphoribosyltransferase activity by histidine. The protein is ATP phosphoribosyltransferase regulatory subunit of Prochlorococcus marinus (strain MIT 9211).